A 481-amino-acid polypeptide reads, in one-letter code: Cis-aconitate decarboxylase (481 aa).

Residues 462 to 481 (SPPEVASNSPACNNSITNLS) form a disordered region. The segment covering 467–481 (ASNSPACNNSITNLS) has biased composition (polar residues).

The protein belongs to the PrpD family. As to quaternary structure, homodimer. Expressed in LPS-tolerized macrophages (at protein level). Expressed in peripheral blood mononuclear cells (PBMCs), microglia and macrophage cells.

Its subcellular location is the mitochondrion. The catalysed reaction is cis-aconitate + H(+) = itaconate + CO2. Cis-aconitate decarboxylase that catalyzes production of itaconate and is involved in the inhibition of the inflammatory response. Acts as a negative regulator of the Toll-like receptors (TLRs)-mediated inflammatory innate response by stimulating the tumor necrosis factor alpha-induced protein TNFAIP3 expression via reactive oxygen species (ROS) in LPS-tolerized macrophages. Involved in antimicrobial response of innate immune cells; ACOD1-mediated itaconic acid production contributes to the antimicrobial activity of macrophages by generating itaconate, leading to alkylation of proteins, such as TFEB. Involved in antiviral response following infection by flavivirus in neurons: ACOD1-mediated itaconate production inhibits the activity of succinate dehydrogenase, generating a metabolic state in neurons that suppresses replication of viral genomes. Plays a role in the embryo implantation. The polypeptide is Cis-aconitate decarboxylase (Homo sapiens (Human)).